A 354-amino-acid chain; its full sequence is uncharacterized protein (354 aa).

This is an uncharacterized protein from Rickettsia prowazekii (strain Madrid E).